The primary structure comprises 275 residues: NH(3)-dependent NAD(+) synthetase (275 aa).

46–53 (GISGGQDS) provides a ligand contact to ATP. D52 is a Mg(2+) binding site. Residue R140 participates in deamido-NAD(+) binding. Position 160 (T160) interacts with ATP. Residue E165 participates in Mg(2+) binding. K173 and D180 together coordinate deamido-NAD(+). 2 residues coordinate ATP: K189 and T211. 260–261 (HK) provides a ligand contact to deamido-NAD(+).

This sequence belongs to the NAD synthetase family. Homodimer.

It catalyses the reaction deamido-NAD(+) + NH4(+) + ATP = AMP + diphosphate + NAD(+) + H(+). Its pathway is cofactor biosynthesis; NAD(+) biosynthesis; NAD(+) from deamido-NAD(+) (ammonia route): step 1/1. In terms of biological role, catalyzes the ATP-dependent amidation of deamido-NAD to form NAD. Uses ammonia as a nitrogen source. This is NH(3)-dependent NAD(+) synthetase from Salmonella dublin (strain CT_02021853).